We begin with the raw amino-acid sequence, 336 residues long: Coproporphyrin III ferrochelatase (336 aa).

Serine 52 and tyrosine 116 together coordinate Fe-coproporphyrin III. 2 residues coordinate Fe(2+): histidine 172 and glutamate 255.

It belongs to the ferrochelatase family.

The protein localises to the cytoplasm. The enzyme catalyses Fe-coproporphyrin III + 2 H(+) = coproporphyrin III + Fe(2+). It participates in porphyrin-containing compound metabolism; protoheme biosynthesis. Involved in coproporphyrin-dependent heme b biosynthesis. Catalyzes the insertion of ferrous iron into coproporphyrin III to form Fe-coproporphyrin III. This is Coproporphyrin III ferrochelatase from Mycobacterium avium (strain 104).